We begin with the raw amino-acid sequence, 319 residues long: MKIIFAGTPDFAATALDALIKTPHDIVAVYTQPDRKAGRGQKLTPSPVKQLALEHNLPVLQPLHFKSSTEEGLAAQAELAAFNADVMVVAAYGLILPQIVLDTPKYGCLNIHGSLLPRWRGAAPIQRAIAAGDAETGVTIMKMAAGLDTGDMMFKTYCPIEASDTSASLYEKLAAQGAEAICTVLECEQQLQKFLAEREVQDENQTVYAHKLVKAEAQIDWTQDAIQIDRNIRAFNPWPVAFIPLDDKNNLRVWESTVSKLIAPDAEAGKIIAMDKHGIHVACGTGVVCLTALQWPGGKALNPVQIIQTQKLNIGQVLA.

Position 114–117 (114–117) interacts with (6S)-5,6,7,8-tetrahydrofolate; that stretch reads SLLP.

The protein belongs to the Fmt family.

The enzyme catalyses L-methionyl-tRNA(fMet) + (6R)-10-formyltetrahydrofolate = N-formyl-L-methionyl-tRNA(fMet) + (6S)-5,6,7,8-tetrahydrofolate + H(+). Functionally, attaches a formyl group to the free amino group of methionyl-tRNA(fMet). The formyl group appears to play a dual role in the initiator identity of N-formylmethionyl-tRNA by promoting its recognition by IF2 and preventing the misappropriation of this tRNA by the elongation apparatus. The chain is Methionyl-tRNA formyltransferase from Acinetobacter baylyi (strain ATCC 33305 / BD413 / ADP1).